A 694-amino-acid chain; its full sequence is Methionine--tRNA ligase (694 aa).

A 'HIGH' region motif is present at residues 12-22; that stretch reads PYANGPLHLGH. 4 residues coordinate Zn(2+): cysteine 143, cysteine 146, cysteine 156, and cysteine 159. The 'KMSKS' region signature appears at 330-334; it reads KMSKS. Residue lysine 333 coordinates ATP. The span at 550-573 shows a compositional bias: low complexity; that stretch reads MAAPAAPATTTKPAPSKADAKPAA. Positions 550–582 are disordered; the sequence is MAAPAAPATTTKPAPSKADAKPAAVANPESQTT. A tRNA-binding domain is found at 591 to 694; the sequence is DFAKLDLRIG…SGAQPGMPVR (104 aa).

It belongs to the class-I aminoacyl-tRNA synthetase family. MetG type 1 subfamily. Homodimer. Zn(2+) is required as a cofactor.

It is found in the cytoplasm. It carries out the reaction tRNA(Met) + L-methionine + ATP = L-methionyl-tRNA(Met) + AMP + diphosphate. Is required not only for elongation of protein synthesis but also for the initiation of all mRNA translation through initiator tRNA(fMet) aminoacylation. The sequence is that of Methionine--tRNA ligase from Xanthomonas euvesicatoria pv. vesicatoria (strain 85-10) (Xanthomonas campestris pv. vesicatoria).